The chain runs to 329 residues: Nuclear pore complex protein NUP35 (329 aa).

Disordered stretches follow at residues 48-105 (NFGG…GKGK) and 123-167 (VSGS…PPRE). The span at 123–139 (VSGSPSWWSQSKAGSST) shows a compositional bias: polar residues. In terms of domain architecture, RRM Nup35-type spans 183 to 264 (LDEEEWVTVY…KPVDPIQKQA (82 aa)). Positions 271–315 (NQGFMPLPPPSSTRNTARPLSRPQYLQNGSAFSPQPSGGAMASPS) are disordered. Over residues 282–306 (STRNTARPLSRPQYLQNGSAFSPQP) the composition is skewed to polar residues.

This sequence belongs to the Nup35 family. Part of the nuclear pore complex (NPC). The NPC has an eight-fold symmetrical structure comprising a central transport channel and two rings, the cytoplasmic and nuclear rings, to which eight filaments are attached. The cytoplasmic filaments have loose ends, while the nuclear filaments are joined in a distal ring, forming a nuclear basket. NPCs are highly dynamic in configuration and composition, and can be devided in 3 subcomplexes, the NUP62 subcomplex, the NUP107-160 subcomplex and the NUP93 subcomplex, containing approximately 30 different nucleoporin proteins.

It is found in the nucleus. Its subcellular location is the nuclear pore complex. This Arabidopsis thaliana (Mouse-ear cress) protein is Nuclear pore complex protein NUP35.